A 496-amino-acid polypeptide reads, in one-letter code: Proline--tRNA ligase (496 aa).

It belongs to the class-II aminoacyl-tRNA synthetase family. ProS type 3 subfamily. In terms of assembly, homodimer.

It localises to the cytoplasm. It catalyses the reaction tRNA(Pro) + L-proline + ATP = L-prolyl-tRNA(Pro) + AMP + diphosphate. Catalyzes the attachment of proline to tRNA(Pro) in a two-step reaction: proline is first activated by ATP to form Pro-AMP and then transferred to the acceptor end of tRNA(Pro). The chain is Proline--tRNA ligase from Phocaeicola vulgatus (strain ATCC 8482 / DSM 1447 / JCM 5826 / CCUG 4940 / NBRC 14291 / NCTC 11154) (Bacteroides vulgatus).